Here is a 223-residue protein sequence, read N- to C-terminus: ATP phosphoribosyltransferase (223 aa).

The protein belongs to the ATP phosphoribosyltransferase family. Short subfamily. In terms of assembly, heteromultimer composed of HisG and HisZ subunits.

It localises to the cytoplasm. The enzyme catalyses 1-(5-phospho-beta-D-ribosyl)-ATP + diphosphate = 5-phospho-alpha-D-ribose 1-diphosphate + ATP. The protein operates within amino-acid biosynthesis; L-histidine biosynthesis; L-histidine from 5-phospho-alpha-D-ribose 1-diphosphate: step 1/9. Catalyzes the condensation of ATP and 5-phosphoribose 1-diphosphate to form N'-(5'-phosphoribosyl)-ATP (PR-ATP). Has a crucial role in the pathway because the rate of histidine biosynthesis seems to be controlled primarily by regulation of HisG enzymatic activity. In Sphingopyxis alaskensis (strain DSM 13593 / LMG 18877 / RB2256) (Sphingomonas alaskensis), this protein is ATP phosphoribosyltransferase.